The primary structure comprises 135 residues: ATP synthase epsilon chain (135 aa).

Belongs to the ATPase epsilon chain family. As to quaternary structure, F-type ATPases have 2 components, CF(1) - the catalytic core - and CF(0) - the membrane proton channel. CF(1) has five subunits: alpha(3), beta(3), gamma(1), delta(1), epsilon(1). CF(0) has three main subunits: a, b and c.

The protein resides in the cellular thylakoid membrane. Produces ATP from ADP in the presence of a proton gradient across the membrane. This Prochlorococcus marinus (strain NATL1A) protein is ATP synthase epsilon chain.